The primary structure comprises 82 residues: Antitoxin MazE2 (82 aa).

In terms of assembly, probably forms a complex with cognate toxin MazF2.

In terms of biological role, antitoxin component of a type II toxin-antitoxin (TA) system. Labile antitoxin that binds to cognate MazF2 toxin and counteracts its endoribonuclease activity. The protein is Antitoxin MazE2 (mazE2) of Mycobacterium bovis (strain ATCC BAA-935 / AF2122/97).